We begin with the raw amino-acid sequence, 286 residues long: Protein FAM87A (286 aa).

A run of 2 helical transmembrane segments spans residues 68-88 and 161-181; these read YLHS…ETAL and SFFV…GDML.

The protein belongs to the FAM87 family.

Its subcellular location is the membrane. This is Protein FAM87A (FAM87A) from Homo sapiens (Human).